A 229-amino-acid chain; its full sequence is Non-structural protein P8 (229 aa).

Residues 14–26 (MKHNQDRVEELSL) are CCM-I. The tract at residues 94 to 116 (IKRHVNEQILPKLKSDLSELKKK) is CCM-III. 2 consecutive transmembrane segments (helical) span residues 119 to 139 (IIHTTLLVAAVVALLTSVCTL) and 162 to 182 (SLNPMLGVVNLGATFLMMVCA). The tract at residues 185–198 (ERALNQQIDMIKKE) is CCM-II.

The protein belongs to the orbivirus NS3 family. Forms homooligomers via coiled-coil motif. Interacts with host OPTN; this interaction inhibits innate immune response.

The protein resides in the host cell membrane. It is found in the host Golgi apparatus. Functionally, plays a role in the inhibition of host innate immune response. Interacts with host OPTN and thus inhibits the recruitment of TBK1 to the host Golgi apparatus. In turn, downstream partner IRF3 cannot be activated and IFN-beta production is impaired. Its function is as follows. Facilitates viral particle release either by increasing plasma membrane permeability through a viroporin-like activity or by viral budding. This chain is Non-structural protein P8 (Segment-10), found in Bluetongue virus 10 (isolate USA) (BTV 10).